The primary structure comprises 138 residues: Proofreading thioesterase EntH (138 aa).

Glutamate 64 functions as the Nucleophile or proton acceptor in the catalytic mechanism.

Belongs to the thioesterase PaaI family. As to quaternary structure, homotetramer. Dimer of dimers. Interacts specifically with the aryl carrier protein (ArCP) domain of EntB.

The protein localises to the cytoplasm. It participates in siderophore biosynthesis; enterobactin biosynthesis. Functionally, required for optimal enterobactin synthesis. Acts as a proofreading enzyme that prevents EntB misacylation by hydrolyzing the thioester bound existing between EntB and wrongly charged molecules. The polypeptide is Proofreading thioesterase EntH (Salmonella arizonae (strain ATCC BAA-731 / CDC346-86 / RSK2980)).